We begin with the raw amino-acid sequence, 722 residues long: Putative tyrosine-protein kinase in cps region (722 aa).

The next 2 helical transmembrane spans lie at 31–53 and 427–449; these read IIIA…ATPI and IVVL…VRIL.

This sequence belongs to the etk/wzc family. In terms of processing, autophosphorylated on tyrosine residue(s).

Its subcellular location is the cell inner membrane. The catalysed reaction is L-tyrosyl-[protein] + ATP = O-phospho-L-tyrosyl-[protein] + ADP + H(+). The protein operates within glycan metabolism; exopolysaccharide biosynthesis. The polypeptide is Putative tyrosine-protein kinase in cps region (Klebsiella pneumoniae).